The chain runs to 152 residues: Transcriptional regulator MraZ (152 aa).

2 consecutive SpoVT-AbrB domains span residues 5–52 (ASAI…PLDE) and 81–124 (AHEC…DEAA).

It belongs to the MraZ family. As to quaternary structure, forms oligomers.

It localises to the cytoplasm. It is found in the nucleoid. The sequence is that of Transcriptional regulator MraZ from Shewanella violacea (strain JCM 10179 / CIP 106290 / LMG 19151 / DSS12).